A 310-amino-acid polypeptide reads, in one-letter code: tRNA dimethylallyltransferase (310 aa).

ATP is bound at residue 24–31; the sequence is GPTASGKT. Residue 26–31 participates in substrate binding; the sequence is TASGKT. The segment at 49–52 is interaction with substrate tRNA; it reads DSRQ.

Belongs to the IPP transferase family. As to quaternary structure, monomer. Requires Mg(2+) as cofactor.

It catalyses the reaction adenosine(37) in tRNA + dimethylallyl diphosphate = N(6)-dimethylallyladenosine(37) in tRNA + diphosphate. Catalyzes the transfer of a dimethylallyl group onto the adenine at position 37 in tRNAs that read codons beginning with uridine, leading to the formation of N6-(dimethylallyl)adenosine (i(6)A). This chain is tRNA dimethylallyltransferase, found in Synechococcus sp. (strain CC9311).